Consider the following 169-residue polypeptide: Histone H1.9 (169 aa).

Composition is skewed to polar residues over residues 1–10 (MSLVSPSPDS) and 19–36 (DAST…IGPN). The segment at 1 to 36 (MSLVSPSPDSNAVMAGDQDASTSQVPSQSESKIGPN) is disordered. In terms of domain architecture, H15 spans 43–116 (RKPTMSKVIL…GASGSFRLGK (74 aa)). A phosphoserine mark is found at serine 62 and serine 65. Positions 118–142 (QAFKSKCKAKRRQRRQKPGQRRTGS) are enriched in basic residues. Positions 118–154 (QAFKSKCKAKRRQRRQKPGQRRTGSRRSLLGSKKSNN) are disordered.

It belongs to the histone H1/H5 family.

Its subcellular location is the nucleus. The protein resides in the chromosome. DNA-binding protein that may be implicated in chromatin remodeling and/or transcriptional regulation during spermiogenesis, the process of spermatid maturation into spermatozoa. This Rattus norvegicus (Rat) protein is Histone H1.9.